We begin with the raw amino-acid sequence, 1407 residues long: DNA-directed RNA polymerase subunit beta' (1407 aa).

Zn(2+) contacts are provided by C70, C72, C85, and C88. 3 residues coordinate Mg(2+): D460, D462, and D464. Position 972 is an N6-acetyllysine (K972).

This sequence belongs to the RNA polymerase beta' chain family. The RNAP catalytic core consists of 2 alpha, 1 beta, 1 beta' and 1 omega subunit. When a sigma factor is associated with the core the holoenzyme is formed, which can initiate transcription. The cofactor is Mg(2+). Requires Zn(2+) as cofactor.

It carries out the reaction RNA(n) + a ribonucleoside 5'-triphosphate = RNA(n+1) + diphosphate. Its function is as follows. DNA-dependent RNA polymerase catalyzes the transcription of DNA into RNA using the four ribonucleoside triphosphates as substrates. This chain is DNA-directed RNA polymerase subunit beta', found in Escherichia coli O6:K15:H31 (strain 536 / UPEC).